The sequence spans 631 residues: Biotin--protein ligase (631 aa).

The 213-residue stretch at 341-553 (ELYAKLINGC…QFDRYHRLLL (213 aa)) folds into the BPL/LPL catalytic domain.

This sequence belongs to the biotin--protein ligase family. Monomer.

It is found in the cytoplasm. The catalysed reaction is apo-[methylmalonyl-CoA:pyruvate carboxytransferase] + biotin + ATP = holo-[methylmalonyl-CoA:pyruvate carboxytransferase] + AMP + diphosphate + H(+). It catalyses the reaction apo-[propionyl-CoA:carbon-dioxide ligase (ADP-forming)] + biotin + ATP = holo-[propionyl-CoA:carbon-dioxide ligase (ADP-forming)] + AMP + diphosphate + H(+). It carries out the reaction apo-[3-methylcrotonoyl-CoA:carbon-dioxide ligase (ADP-forming)] + biotin + ATP = holo-[3-methylcrotonoyl-CoA:carbon-dioxide ligase (ADP-forming)] + AMP + diphosphate + H(+). The enzyme catalyses biotin + L-lysyl-[protein] + ATP = N(6)-biotinyl-L-lysyl-[protein] + AMP + diphosphate + H(+). In terms of biological role, post-translational modification of specific protein by attachment of biotin. Acts on various carboxylases such as acetyl-CoA-carboxylase, pyruvate carboxylase, propionyl CoA carboxylase, and 3-methylcrotonyl CoA carboxylase. The polypeptide is Biotin--protein ligase (bpl1) (Schizosaccharomyces pombe (strain 972 / ATCC 24843) (Fission yeast)).